We begin with the raw amino-acid sequence, 826 residues long: Lon protease (826 aa).

Basic and acidic residues predominate over residues 1–20; that stretch reads MSEEELNNRDTESKQEHDEN. Residues 1–27 form a disordered region; the sequence is MSEEELNNRDTESKQEHDENNSNFEAG. Positions 33-231 constitute a Lon N-terminal domain; it reads LPVLPLREVI…KVHALLEKEL (199 aa). Residue 384-391 coordinates ATP; it reads GPPGVGKT. The Lon proteolytic domain occupies 620–801; the sequence is ENLVGMTTGL…SEALTFTLAE (182 aa). Residues S707 and K750 contribute to the active site.

Belongs to the peptidase S16 family. Homohexamer. Organized in a ring with a central cavity.

It localises to the cytoplasm. The catalysed reaction is Hydrolysis of proteins in presence of ATP.. In terms of biological role, ATP-dependent serine protease that mediates the selective degradation of mutant and abnormal proteins as well as certain short-lived regulatory proteins. Required for cellular homeostasis and for survival from DNA damage and developmental changes induced by stress. Degrades polypeptides processively to yield small peptide fragments that are 5 to 10 amino acids long. Binds to DNA in a double-stranded, site-specific manner. The sequence is that of Lon protease from Neorickettsia sennetsu (strain ATCC VR-367 / Miyayama) (Ehrlichia sennetsu).